The chain runs to 212 residues: Ribosomal RNA small subunit methyltransferase G (212 aa).

S-adenosyl-L-methionine is bound by residues G80, L85, 131 to 132 (AE), and R146.

This sequence belongs to the methyltransferase superfamily. RNA methyltransferase RsmG family.

It is found in the cytoplasm. It carries out the reaction guanosine(527) in 16S rRNA + S-adenosyl-L-methionine = N(7)-methylguanosine(527) in 16S rRNA + S-adenosyl-L-homocysteine. In terms of biological role, specifically methylates the N7 position of guanine in position 527 of 16S rRNA. The polypeptide is Ribosomal RNA small subunit methyltransferase G (Xanthomonas axonopodis pv. citri (strain 306)).